The sequence spans 95 residues: Co-chaperonin GroES (95 aa).

Belongs to the GroES chaperonin family. In terms of assembly, heptamer of 7 subunits arranged in a ring. Interacts with the chaperonin GroEL.

It is found in the cytoplasm. Together with the chaperonin GroEL, plays an essential role in assisting protein folding. The GroEL-GroES system forms a nano-cage that allows encapsulation of the non-native substrate proteins and provides a physical environment optimized to promote and accelerate protein folding. GroES binds to the apical surface of the GroEL ring, thereby capping the opening of the GroEL channel. This is Co-chaperonin GroES from Caldicellulosiruptor bescii (strain ATCC BAA-1888 / DSM 6725 / KCTC 15123 / Z-1320) (Anaerocellum thermophilum).